Here is a 470-residue protein sequence, read N- to C-terminus: Chromosomal replication initiator protein DnaA (470 aa).

The interval 1–79 (MTDDTWGLLR…AVQRLAFKVA (79 aa)) is domain I, interacts with DnaA modulators. The segment at 79–128 (AANSPTRPVQPTMSEAIEEPAPLQTTVVDQLGNQEGNTSVKSPPEDLQAA) is domain II. Residues 129–350 (PLDPRFTFDS…GALTRLFAFA (222 aa)) are domain III, AAA+ region. Residues Gly173, Gly175, Lys176, and Thr177 each contribute to the ATP site. A domain IV, binds dsDNA region spans residues 351-470 (SLVGREIDMD…VEMLRRSLEA (120 aa)).

This sequence belongs to the DnaA family. As to quaternary structure, oligomerizes as a right-handed, spiral filament on DNA at oriC.

The protein resides in the cytoplasm. In terms of biological role, plays an essential role in the initiation and regulation of chromosomal replication. ATP-DnaA binds to the origin of replication (oriC) to initiate formation of the DNA replication initiation complex once per cell cycle. Binds the DnaA box (a 9 base pair repeat at the origin) and separates the double-stranded (ds)DNA. Forms a right-handed helical filament on oriC DNA; dsDNA binds to the exterior of the filament while single-stranded (ss)DNA is stabiized in the filament's interior. The ATP-DnaA-oriC complex binds and stabilizes one strand of the AT-rich DNA unwinding element (DUE), permitting loading of DNA polymerase. After initiation quickly degrades to an ADP-DnaA complex that is not apt for DNA replication. Binds acidic phospholipids. The chain is Chromosomal replication initiator protein DnaA from Ruegeria sp. (strain TM1040) (Silicibacter sp.).